A 131-amino-acid polypeptide reads, in one-letter code: Large ribosomal subunit protein bL12 (131 aa).

The span at 100-125 shows a compositional bias: basic and acidic residues; it reads STPKPIKEGISKEDAEAAKKQLEDAG. The tract at residues 100-131 is disordered; it reads STPKPIKEGISKEDAEAAKKQLEDAGGKVSIK.

Belongs to the bacterial ribosomal protein bL12 family. As to quaternary structure, homodimer. Part of the ribosomal stalk of the 50S ribosomal subunit. Forms a multimeric L10(L12)X complex, where L10 forms an elongated spine to which 2 to 4 L12 dimers bind in a sequential fashion. Binds GTP-bound translation factors.

In terms of biological role, forms part of the ribosomal stalk which helps the ribosome interact with GTP-bound translation factors. Is thus essential for accurate translation. The chain is Large ribosomal subunit protein bL12 from Cyanothece sp. (strain PCC 7425 / ATCC 29141).